A 257-amino-acid polypeptide reads, in one-letter code: Snake venom serine protease KN11 (257 aa).

The first 18 residues, 1–18, serve as a signal peptide directing secretion; the sequence is MVLIRVLANLLILQLSYA. The propeptide occupies 19–24; the sequence is QKSSEL. The Peptidase S1 domain occupies 25 to 248; sequence VTGGHPCNIN…HLDWIKSIIA (224 aa). Disulfide bonds link Cys31–Cys162, Cys49–Cys65, Cys97–Cys255, Cys141–Cys209, Cys173–Cys188, and Cys199–Cys224. Residues His64 and Asp109 each act as charge relay system in the active site. 2 N-linked (GlcNAc...) asparagine glycosylation sites follow: Asn120 and Asn121. Catalysis depends on Ser203, which acts as the Charge relay system.

Belongs to the peptidase S1 family. Snake venom subfamily. Monomer. In terms of tissue distribution, expressed by the venom gland.

It localises to the secreted. Its function is as follows. Snake venom serine protease that may act in the hemostasis system of the prey. The polypeptide is Snake venom serine protease KN11 (Trimeresurus stejnegeri (Chinese green tree viper)).